Consider the following 219-residue polypeptide: Octanoyltransferase (219 aa).

In terms of domain architecture, BPL/LPL catalytic spans 32–207; the sequence is ENSQDEIWIV…TLSQELGLDK (176 aa). Residues 71–78, 138–140, and 151–153 contribute to the substrate site; these read RGGQVTYH, SLG, and GLA. The Acyl-thioester intermediate role is filled by Cys169.

Belongs to the LipB family.

The protein localises to the cytoplasm. It catalyses the reaction octanoyl-[ACP] + L-lysyl-[protein] = N(6)-octanoyl-L-lysyl-[protein] + holo-[ACP] + H(+). It participates in protein modification; protein lipoylation via endogenous pathway; protein N(6)-(lipoyl)lysine from octanoyl-[acyl-carrier-protein]: step 1/2. In terms of biological role, catalyzes the transfer of endogenously produced octanoic acid from octanoyl-acyl-carrier-protein onto the lipoyl domains of lipoate-dependent enzymes. Lipoyl-ACP can also act as a substrate although octanoyl-ACP is likely to be the physiological substrate. The chain is Octanoyltransferase from Shewanella pealeana (strain ATCC 700345 / ANG-SQ1).